Reading from the N-terminus, the 137-residue chain is Secreted RxLR effector protein 67 (137 aa).

The signal sequence occupies residues Met-1–Ala-18. The short motif at Arg-32 to Arg-61 is the RxLR-dEER element. The tract at residues Thr-40–Ser-65 is disordered. Residues Trp-114–Ala-134 traverse the membrane as a helical segment.

It belongs to the RxLR effector family.

It localises to the secreted. Its subcellular location is the host cytoplasm. The protein localises to the host nucleus. It is found in the membrane. In terms of biological role, effector that partially suppresses the tobacco programmed cell death induced by cell death-inducing proteins. This is Secreted RxLR effector protein 67 from Plasmopara viticola (Downy mildew of grapevine).